Here is a 686-residue protein sequence, read N- to C-terminus: Band 4.1-like protein 4A (686 aa).

Residues 11-299 enclose the FERM domain; that stretch reads FYCEVLLLDE…EHHTFFRMPE (289 aa). Phosphoserine is present on Ser-304. Positions 331 to 686 are disordered; the sequence is RDLSIQLPRP…IQASRLKTET (356 aa). Residues 357 to 376 are compositionally biased toward polar residues; the sequence is AQTQPAESNSISRITANMEN. 3 positions are modified to phosphoserine: Ser-389, Ser-393, and Ser-402. Residues 418–428 are compositionally biased toward polar residues; the sequence is GPQSGLYNSPS. Positions 479-489 are enriched in low complexity; sequence RCNTSSGSESE. Basic and acidic residues-rich tracts occupy residues 518–527 and 547–561; these read VLRRQKEKNQ and QAKE…KELV. Residues 588–601 show a composition bias toward basic residues; sequence IRHSHSPRSYRQYR. The segment covering 648–658 has biased composition (basic and acidic residues); that stretch reads GSKDSLMEEKP. Positions 673–686 are enriched in polar residues; sequence TIKTIQASRLKTET.

As to expression, expressed in many tissues. High levels of expression in brain, liver, thymus and peripheral blood leukocytes and low levels of expression in heart, kidney, testis and colon.

Its subcellular location is the cytoplasm. It is found in the cytoskeleton. This Homo sapiens (Human) protein is Band 4.1-like protein 4A.